The primary structure comprises 545 residues: Chaperonin GroEL 3 (545 aa).

ATP is bound by residues 29–32 (TLGP), 86–90 (DGTTT), Gly-413, 479–481 (DAV), and Asp-495. A disordered region spans residues 526–545 (DKQAKAPAGVGPGPGEGFDY). Residues 535-545 (VGPGPGEGFDY) are compositionally biased toward gly residues.

Belongs to the chaperonin (HSP60) family. As to quaternary structure, forms a cylinder of 14 subunits composed of two heptameric rings stacked back-to-back. Interacts with the co-chaperonin GroES.

Its subcellular location is the cytoplasm. The enzyme catalyses ATP + H2O + a folded polypeptide = ADP + phosphate + an unfolded polypeptide.. Together with its co-chaperonin GroES, plays an essential role in assisting protein folding. The GroEL-GroES system forms a nano-cage that allows encapsulation of the non-native substrate proteins and provides a physical environment optimized to promote and accelerate protein folding. In Trichormus variabilis (strain ATCC 29413 / PCC 7937) (Anabaena variabilis), this protein is Chaperonin GroEL 3.